Consider the following 345-residue polypeptide: AA9 family lytic polysaccharide monooxygenase D (345 aa).

The signal sequence occupies residues 1–21 (MPSFTSKTLLAALAGAAAVNA). Residues H22 and H107 each coordinate Cu(2+). C77 and C200 are joined by a disulfide. N-linked (GlcNAc...) asparagine glycosylation is present at N160. Residues H186 and Q195 each contribute to the O2 site. Y197 is a binding site for Cu(2+). Residues 315-345 (VQTSTRPISTRPQPTRCPGLGRRHLRKVARA) are disordered. Over residues 318 to 327 (STRPISTRPQ) the composition is skewed to polar residues. Over residues 335–345 (GRRHLRKVARA) the composition is skewed to basic residues.

The protein belongs to the polysaccharide monooxygenase AA9 family. Requires Cu(2+) as cofactor.

The protein localises to the secreted. It catalyses the reaction [(1-&gt;4)-beta-D-glucosyl]n+m + reduced acceptor + O2 = 4-dehydro-beta-D-glucosyl-[(1-&gt;4)-beta-D-glucosyl]n-1 + [(1-&gt;4)-beta-D-glucosyl]m + acceptor + H2O.. In terms of biological role, lytic polysaccharide monooxygenase (LPMO) that depolymerizes crystalline and amorphous polysaccharides via the oxidation of scissile alpha- or beta-(1-4)-glycosidic bonds, yielding C1 or C4 oxidation products. Catalysis by LPMOs requires the reduction of the active-site copper from Cu(II) to Cu(I) by a reducing agent and H(2)O(2) or O(2) as a cosubstrate. The sequence is that of AA9 family lytic polysaccharide monooxygenase D from Podospora anserina (strain S / ATCC MYA-4624 / DSM 980 / FGSC 10383) (Pleurage anserina).